The primary structure comprises 394 residues: Probable dual specificity protein phosphatase DDB_G0281963 (394 aa).

The 141-residue stretch at 2 to 142 (NDVSRIFPGF…LKKYELILKK (141 aa)) folds into the Tyrosine-protein phosphatase domain. C86 (phosphocysteine intermediate) is an active-site residue. The tract at residues 147–191 (PQIVEKESEEEDDDEDDDDDDYDSDEDDDDDSEDDDFEEEFDNVV) is disordered. Acidic residues predominate over residues 153 to 188 (ESEEEDDDEDDDDDDYDSDEDDDDDSEDDDFEEEFD).

It belongs to the protein-tyrosine phosphatase family. Non-receptor class dual specificity subfamily.

It catalyses the reaction O-phospho-L-tyrosyl-[protein] + H2O = L-tyrosyl-[protein] + phosphate. The catalysed reaction is O-phospho-L-seryl-[protein] + H2O = L-seryl-[protein] + phosphate. It carries out the reaction O-phospho-L-threonyl-[protein] + H2O = L-threonyl-[protein] + phosphate. Functionally, has a dual specificity toward Ser/Thr and Tyr-containing proteins. The protein is Probable dual specificity protein phosphatase DDB_G0281963 of Dictyostelium discoideum (Social amoeba).